The chain runs to 153 residues: UPF0756 membrane protein LCABL_15860 (153 aa).

The next 4 membrane-spanning stretches (helical) occupy residues 4–24 (WLFL…SLII), 52–72 (WGVT…EIGF), 85–105 (WIAI…VGLL), and 115–135 (LVFG…GPVI).

This sequence belongs to the UPF0756 family.

The protein resides in the cell membrane. The sequence is that of UPF0756 membrane protein LCABL_15860 from Lacticaseibacillus casei (strain BL23) (Lactobacillus casei).